The following is a 467-amino-acid chain: Protein PHOSPHATE STARVATION RESPONSE 3 (467 aa).

Residues 227-266 form a disordered region; sequence MSLPVSSCSDQEDLQDARSPAKVQLSSSRSSSGTASCNKP. Positions 262–322 constitute an HTH myb-type domain; sequence SCNKPRLRWT…HLQKYRLAKY (61 aa). Positions 293-318 form a DNA-binding region, H-T-H motif; sequence PKGVLKLMKVEGLTIYHIKSHLQKYR. The span at 327-337 shows a compositional bias: basic and acidic residues; that stretch reads KEDKKQEEKKT. Disordered stretches follow at residues 327 to 353 and 400 to 467; these read KEDK…KSAQ and RESI…VHDE. Polar residues predominate over residues 402–412; the sequence is SISSMTSTTEG. Composition is skewed to basic and acidic residues over residues 419 to 428 and 438 to 467; these read PMEKTEDKAE and RITD…VHDE.

In terms of tissue distribution, expressed in the root cap and in the exodermis of the root, in the root tip of lateral roots, in the mesophyll cells of the leaf, in pollen, vascular cylinder of the anther and the veins of the lemma, palea and pistils, and in the xylem and phloem regions of large vascular bundles, small vascular bundles and diffuse vascular bundles in node I.

Its subcellular location is the nucleus. Functionally, transcription factor involved in phosphate starvation signaling. Binds to P1BS, an imperfect palindromic sequence 5'-GNATATNC-3', to promote the expression of inorganic phosphate (Pi) starvation-responsive genes. Functionally redundant with PHR1 and PHR2 in regulating Pi starvation response and Pi homeostasis. The polypeptide is Protein PHOSPHATE STARVATION RESPONSE 3 (Oryza sativa subsp. japonica (Rice)).